The primary structure comprises 101 residues: MMDESLCGGLPPEICEQLSVEEQIIKIRLEKRRFGREVTIIEGINEKEFNLKKLASTLKSRLATGGTAKNGRIELQGDHRHRVKKILVELGFPEENITIID.

It belongs to the SUI1 family.

The protein is Protein translation factor SUI1 homolog of Aeropyrum pernix (strain ATCC 700893 / DSM 11879 / JCM 9820 / NBRC 100138 / K1).